Consider the following 310-residue polypeptide: Lipoyl synthase (310 aa).

[4Fe-4S] cluster-binding residues include C45, C50, C56, C71, C75, C78, and S285. The region spanning 57–274 (WTKKHATVMI…GSIARAKGFL (218 aa)) is the Radical SAM core domain.

This sequence belongs to the radical SAM superfamily. Lipoyl synthase family. It depends on [4Fe-4S] cluster as a cofactor.

Its subcellular location is the cytoplasm. The enzyme catalyses [[Fe-S] cluster scaffold protein carrying a second [4Fe-4S](2+) cluster] + N(6)-octanoyl-L-lysyl-[protein] + 2 oxidized [2Fe-2S]-[ferredoxin] + 2 S-adenosyl-L-methionine + 4 H(+) = [[Fe-S] cluster scaffold protein] + N(6)-[(R)-dihydrolipoyl]-L-lysyl-[protein] + 4 Fe(3+) + 2 hydrogen sulfide + 2 5'-deoxyadenosine + 2 L-methionine + 2 reduced [2Fe-2S]-[ferredoxin]. The protein operates within protein modification; protein lipoylation via endogenous pathway; protein N(6)-(lipoyl)lysine from octanoyl-[acyl-carrier-protein]: step 2/2. Functionally, catalyzes the radical-mediated insertion of two sulfur atoms into the C-6 and C-8 positions of the octanoyl moiety bound to the lipoyl domains of lipoate-dependent enzymes, thereby converting the octanoylated domains into lipoylated derivatives. This is Lipoyl synthase from Novosphingobium aromaticivorans (strain ATCC 700278 / DSM 12444 / CCUG 56034 / CIP 105152 / NBRC 16084 / F199).